A 100-amino-acid chain; its full sequence is Urease subunit gamma (100 aa).

Belongs to the urease gamma subunit family. As to quaternary structure, heterotrimer of UreA (gamma), UreB (beta) and UreC (alpha) subunits. Three heterotrimers associate to form the active enzyme.

Its subcellular location is the cytoplasm. It catalyses the reaction urea + 2 H2O + H(+) = hydrogencarbonate + 2 NH4(+). It participates in nitrogen metabolism; urea degradation; CO(2) and NH(3) from urea (urease route): step 1/1. The chain is Urease subunit gamma from Synechococcus sp. (strain CC9605).